Consider the following 654-residue polypeptide: Bifunctional 3'-phosphoadenosine 5'-phosphosulfate synthase pps-1 (654 aa).

Residues 1–26 (MLTPRDENNEGDAMPMLKKPRYSSLS) form a disordered region. Residues 1–231 (MLTPRDENNE…VLDHLESKGL (231 aa)) form an adenylyl-sulfate kinase region. 66-71 (GAGKTT) is an ATP binding site. Adenosine 5'-phosphosulfate contacts are provided by residues 93-96 (DNIR), F105, 110-113 (RQEN), 136-137 (IS), K175, and 190-191 (GF). ATP contacts are provided by residues C218, 449–452 (QLRN), 550–554 (GRDPA), and A592. Positions 242-653 (VRELFVSDDL…AGYYKSLQNS (412 aa)) are sulfate adenylyltransferase.

This sequence in the N-terminal section; belongs to the APS kinase family. The protein in the C-terminal section; belongs to the sulfate adenylyltransferase family.

Its subcellular location is the nucleus. It catalyses the reaction sulfate + ATP + H(+) = adenosine 5'-phosphosulfate + diphosphate. The catalysed reaction is adenosine 5'-phosphosulfate + ATP = 3'-phosphoadenylyl sulfate + ADP + H(+). It participates in sulfur metabolism; sulfate assimilation. Bifunctional enzyme with both ATP sulfurylase and APS kinase activity, which mediates two steps in the sulfate activation pathway. The first step is the transfer of a sulfate group to ATP to yield adenosine 5'-phosphosulfate (APS), and the second step is the transfer of a phosphate group from ATP to APS yielding 3'-phosphoadenylylsulfate (PAPS: activated sulfate donor used by sulfotransferase). Required for normal growth and development. Involved in several aspects of both embryonic and postembryonic development, including molting, changes in cell shape, and patterning of epithelial and muscle cells. The polypeptide is Bifunctional 3'-phosphoadenosine 5'-phosphosulfate synthase pps-1 (Caenorhabditis elegans).